Reading from the N-terminus, the 112-residue chain is Ribonuclease P protein component (112 aa).

This sequence belongs to the RnpA family. Consists of a catalytic RNA component (M1 or rnpB) and a protein subunit.

It carries out the reaction Endonucleolytic cleavage of RNA, removing 5'-extranucleotides from tRNA precursor.. In terms of biological role, RNaseP catalyzes the removal of the 5'-leader sequence from pre-tRNA to produce the mature 5'-terminus. It can also cleave other RNA substrates such as 4.5S RNA. The protein component plays an auxiliary but essential role in vivo by binding to the 5'-leader sequence and broadening the substrate specificity of the ribozyme. The sequence is that of Ribonuclease P protein component from Mycoplasma mobile (strain ATCC 43663 / 163K / NCTC 11711) (Mesomycoplasma mobile).